A 540-amino-acid polypeptide reads, in one-letter code: Bifunctional pantoate ligase/cytidylate kinase (540 aa).

A pantoate--beta-alanine ligase region spans residues 1-280; sequence MQWLRTVAAL…VGQTRLIDNL (280 aa). Residue 28–35 coordinates ATP; the sequence is MGSLHEGH. H35 functions as the Proton donor in the catalytic mechanism. Position 59 (Q59) interacts with (R)-pantoate. Q59 lines the beta-alanine pocket. Position 150-153 (150-153) interacts with ATP; the sequence is GQKD. Q156 contacts (R)-pantoate. Residues V179 and 187 to 190 contribute to the ATP site; that span reads YSSR. Residues 281-540 are cytidylate kinase; that stretch reads LLSPEGVDPL…RSGAAHFDII (260 aa). The segment at 288-307 is disordered; it reads DPLPQEQQSAVPPSPKRGRR.

This sequence in the N-terminal section; belongs to the pantothenate synthetase family. It in the C-terminal section; belongs to the cytidylate kinase family. Type 1 subfamily.

It localises to the cytoplasm. It carries out the reaction (R)-pantoate + beta-alanine + ATP = (R)-pantothenate + AMP + diphosphate + H(+). The catalysed reaction is CMP + ATP = CDP + ADP. It catalyses the reaction dCMP + ATP = dCDP + ADP. It participates in cofactor biosynthesis; (R)-pantothenate biosynthesis; (R)-pantothenate from (R)-pantoate and beta-alanine: step 1/1. Its function is as follows. Catalyzes the condensation of pantoate with beta-alanine in an ATP-dependent reaction via a pantoyl-adenylate intermediate. Functionally, catalyzes the transfer of a phosphate group from ATP to either CMP or dCMP to form CDP or dCDP and ADP, respectively. The chain is Bifunctional pantoate ligase/cytidylate kinase from Synechococcus sp. (strain JA-3-3Ab) (Cyanobacteria bacterium Yellowstone A-Prime).